The sequence spans 104 residues: Protein METHYLENE BLUE SENSITIVITY 2 (104 aa).

Residues 1–11 are compositionally biased toward basic residues; the sequence is MTGKAKPKKHT. Disordered stretches follow at residues 1-46 and 64-104; these read MTGK…GHAK and IHHE…SLKK. Basic and acidic residues-rich tracts occupy residues 36 to 46 and 73 to 82; these read RTGKEKGGHAK and LTYEEPRNLH.

It is found in the nucleus. Its subcellular location is the cytoplasm. The protein resides in the stress granule. Its function is as follows. Required for acclimation to reactive oxygen species (ROS) responses downstream of beta-cyclocitral, including singlet oxygen 1O(2) detoxification reactions, especially upon light-mediated photooxidative stress, and leading to programmed cell death. Prevents leaf senescence. This Arabidopsis thaliana (Mouse-ear cress) protein is Protein METHYLENE BLUE SENSITIVITY 2.